Reading from the N-terminus, the 254-residue chain is Phosphoribosylaminoimidazole-succinocarboxamide synthase (254 aa).

It belongs to the SAICAR synthetase family.

The catalysed reaction is 5-amino-1-(5-phospho-D-ribosyl)imidazole-4-carboxylate + L-aspartate + ATP = (2S)-2-[5-amino-1-(5-phospho-beta-D-ribosyl)imidazole-4-carboxamido]succinate + ADP + phosphate + 2 H(+). It participates in purine metabolism; IMP biosynthesis via de novo pathway; 5-amino-1-(5-phospho-D-ribosyl)imidazole-4-carboxamide from 5-amino-1-(5-phospho-D-ribosyl)imidazole-4-carboxylate: step 1/2. The chain is Phosphoribosylaminoimidazole-succinocarboxamide synthase from Gluconobacter oxydans (strain 621H) (Gluconobacter suboxydans).